The following is a 1145-amino-acid chain: Error-prone DNA polymerase (1145 aa).

This sequence belongs to the DNA polymerase type-C family. DnaE2 subfamily.

It localises to the cytoplasm. The enzyme catalyses DNA(n) + a 2'-deoxyribonucleoside 5'-triphosphate = DNA(n+1) + diphosphate. DNA polymerase involved in damage-induced mutagenesis and translesion synthesis (TLS). It is not the major replicative DNA polymerase. The polypeptide is Error-prone DNA polymerase (Rhodopirellula baltica (strain DSM 10527 / NCIMB 13988 / SH1)).